The sequence spans 265 residues: Tryptophan synthase alpha chain (265 aa).

Residues Glu-45 and Asp-56 each act as proton acceptor in the active site.

This sequence belongs to the TrpA family. In terms of assembly, tetramer of two alpha and two beta chains.

It catalyses the reaction (1S,2R)-1-C-(indol-3-yl)glycerol 3-phosphate + L-serine = D-glyceraldehyde 3-phosphate + L-tryptophan + H2O. The protein operates within amino-acid biosynthesis; L-tryptophan biosynthesis; L-tryptophan from chorismate: step 5/5. Functionally, the alpha subunit is responsible for the aldol cleavage of indoleglycerol phosphate to indole and glyceraldehyde 3-phosphate. The sequence is that of Tryptophan synthase alpha chain from Halalkalibacterium halodurans (strain ATCC BAA-125 / DSM 18197 / FERM 7344 / JCM 9153 / C-125) (Bacillus halodurans).